A 239-amino-acid polypeptide reads, in one-letter code: Ribonuclease PH (239 aa).

Phosphate contacts are provided by residues Arg-86 and 124–126 (GTR).

It belongs to the RNase PH family. In terms of assembly, homohexameric ring arranged as a trimer of dimers.

It catalyses the reaction tRNA(n+1) + phosphate = tRNA(n) + a ribonucleoside 5'-diphosphate. Phosphorolytic 3'-5' exoribonuclease that plays an important role in tRNA 3'-end maturation. Removes nucleotide residues following the 3'-CCA terminus of tRNAs; can also add nucleotides to the ends of RNA molecules by using nucleoside diphosphates as substrates, but this may not be physiologically important. Probably plays a role in initiation of 16S rRNA degradation (leading to ribosome degradation) during starvation. The sequence is that of Ribonuclease PH from Rhizobium etli (strain ATCC 51251 / DSM 11541 / JCM 21823 / NBRC 15573 / CFN 42).